We begin with the raw amino-acid sequence, 187 residues long: Adenylate kinase (187 aa).

ATP is bound at residue 11–16 (GAGKGT). The interval 31-60 (STGDILREAVKNQTPMGIEAKRYMDAGDLV) is NMP. Residues Thr-32, Arg-37, 58 to 60 (DLV), 86 to 89 (GFPR), and Gln-93 contribute to the AMP site. The tract at residues 127–137 (GRAEIEGRADD) is LID. Residue Arg-128 participates in ATP binding. Arg-134 and Arg-145 together coordinate AMP. Position 173 (Gly-173) interacts with ATP.

It belongs to the adenylate kinase family. As to quaternary structure, monomer.

It localises to the cytoplasm. It carries out the reaction AMP + ATP = 2 ADP. It functions in the pathway purine metabolism; AMP biosynthesis via salvage pathway; AMP from ADP: step 1/1. In terms of biological role, catalyzes the reversible transfer of the terminal phosphate group between ATP and AMP. Plays an important role in cellular energy homeostasis and in adenine nucleotide metabolism. This chain is Adenylate kinase, found in Leptospira borgpetersenii serovar Hardjo-bovis (strain JB197).